Consider the following 289-residue polypeptide: Homeobox protein Nkx-2.6 (289 aa).

2 disordered regions span residues 75 to 125 and 259 to 289; these read GSNP…PQRK and TPLA…VTAW. The homeobox DNA-binding region spans 123–182; the sequence is QRKSRVLFSQAQVLALERRFKQQRYLTAPEREHLASALQLTSTQVKIWFQNRRYKSKSQR. The segment covering 261 to 274 has biased composition (polar residues); the sequence is LASSGFSPGGQSAA.

This sequence belongs to the NK-2 homeobox family. In terms of tissue distribution, not detected in any neonate or adult tissues.

It is found in the nucleus. In terms of biological role, acts as a transcriptional activator. In conjunction with NKX2-5, may play a role in both pharyngeal and cardiac embryonic development. The chain is Homeobox protein Nkx-2.6 (Nkx2-6) from Mus musculus (Mouse).